The following is a 586-amino-acid chain: Protein CBFA2T2 (586 aa).

The interval 1–95 (MVGIPGPYQF…SSSSSLANQQ (95 aa)) is disordered. Polar residues predominate over residues 56–68 (SSHSNGINHSPPT). A compositionally biased stretch (low complexity) spans 77 to 90 (QRSSNGPSSSSSSS). Positions 102–197 (VRQLSKLKRF…TPSQYLAQHE (96 aa)) constitute a TAFH domain. 2 disordered regions span residues 204 to 242 (STSS…AEPP) and 387 to 417 (IRKG…FGSR). Positions 228–237 (DRREEERETA) are enriched in basic and acidic residues. Residues 399 to 409 (SPSSTDSGASD) show a composition bias toward low complexity. Residues 429-481 (RKAEEAVNEVKRQAMSEVQKAVSEAEQKAFEMIASERARMEQTIVDAKRRAAE) adopt a coiled-coil conformation. Zn(2+) is bound by residues Cys497, Cys500, Cys508, Cys511, Cys517, Cys521, His529, and Cys533. Residues 497 to 533 (CWNCGRKASETCSGCNIARYCGSFCQHKDWEKHHRIC) form an MYND-type zinc finger. Residues 561–586 (SPTLERSSSATSRSSTPASVTAVDGL) are disordered. A compositionally biased stretch (low complexity) spans 566–586 (RSSSATSRSSTPASVTAVDGL).

The protein resides in the nucleus. Its function is as follows. May act as a transcriptional corepressor. This is Protein CBFA2T2 (cbfa2t2) from Xenopus laevis (African clawed frog).